A 311-amino-acid polypeptide reads, in one-letter code: tRNA-cytidine(32) 2-sulfurtransferase (311 aa).

The short motif at 47-52 (SGGKDS) is the PP-loop motif element. [4Fe-4S] cluster-binding residues include Cys-122, Cys-125, and Cys-213.

It belongs to the TtcA family. As to quaternary structure, homodimer. Mg(2+) is required as a cofactor. Requires [4Fe-4S] cluster as cofactor.

It localises to the cytoplasm. It catalyses the reaction cytidine(32) in tRNA + S-sulfanyl-L-cysteinyl-[cysteine desulfurase] + AH2 + ATP = 2-thiocytidine(32) in tRNA + L-cysteinyl-[cysteine desulfurase] + A + AMP + diphosphate + H(+). Its pathway is tRNA modification. Catalyzes the ATP-dependent 2-thiolation of cytidine in position 32 of tRNA, to form 2-thiocytidine (s(2)C32). The sulfur atoms are provided by the cysteine/cysteine desulfurase (IscS) system. This is tRNA-cytidine(32) 2-sulfurtransferase from Escherichia coli O1:K1 / APEC.